A 427-amino-acid polypeptide reads, in one-letter code: Gamma-glutamyl phosphate reductase (427 aa).

The protein belongs to the gamma-glutamyl phosphate reductase family.

It localises to the cytoplasm. The enzyme catalyses L-glutamate 5-semialdehyde + phosphate + NADP(+) = L-glutamyl 5-phosphate + NADPH + H(+). It functions in the pathway amino-acid biosynthesis; L-proline biosynthesis; L-glutamate 5-semialdehyde from L-glutamate: step 2/2. Its function is as follows. Catalyzes the NADPH-dependent reduction of L-glutamate 5-phosphate into L-glutamate 5-semialdehyde and phosphate. The product spontaneously undergoes cyclization to form 1-pyrroline-5-carboxylate. The polypeptide is Gamma-glutamyl phosphate reductase (Rhodospirillum rubrum (strain ATCC 11170 / ATH 1.1.1 / DSM 467 / LMG 4362 / NCIMB 8255 / S1)).